Reading from the N-terminus, the 429-residue chain is Histidinol dehydrogenase (429 aa).

NAD(+) contacts are provided by Tyr-131, Gln-193, and Asn-216. 3 residues coordinate substrate: Ser-239, Gln-261, and His-264. Positions 261 and 264 each coordinate Zn(2+). Catalysis depends on proton acceptor residues Glu-327 and His-328. Substrate contacts are provided by His-328, Asp-361, Glu-415, and His-420. Residue Asp-361 participates in Zn(2+) binding. His-420 contributes to the Zn(2+) binding site.

It belongs to the histidinol dehydrogenase family. Zn(2+) serves as cofactor.

It catalyses the reaction L-histidinol + 2 NAD(+) + H2O = L-histidine + 2 NADH + 3 H(+). Its pathway is amino-acid biosynthesis; L-histidine biosynthesis; L-histidine from 5-phospho-alpha-D-ribose 1-diphosphate: step 9/9. Functionally, catalyzes the sequential NAD-dependent oxidations of L-histidinol to L-histidinaldehyde and then to L-histidine. The protein is Histidinol dehydrogenase (hisD) of Methanocaldococcus jannaschii (strain ATCC 43067 / DSM 2661 / JAL-1 / JCM 10045 / NBRC 100440) (Methanococcus jannaschii).